A 247-amino-acid chain; its full sequence is Agamous-like MADS-box protein FUL-L (247 aa).

Positions 1 to 61 (MGRGRVQLKR…GKLFEYSSDS (61 aa)) constitute an MADS-box domain. The K-box domain occupies 88–178 (QGNWSMDYPK…AKKVKEKEKV (91 aa)). The disordered stretch occupies residues 224–247 (EDGAEARPSPNTLMPPWMLRHVNE).

As to expression, expressed in tendrils and flowers.

Its subcellular location is the nucleus. Its function is as follows. Probable transcription factor involved in flower development. The protein is Agamous-like MADS-box protein FUL-L of Vitis vinifera (Grape).